The chain runs to 232 residues: Large ribosomal subunit protein uL1 (232 aa).

The protein belongs to the universal ribosomal protein uL1 family. As to quaternary structure, part of the 50S ribosomal subunit.

Functionally, binds directly to 23S rRNA. The L1 stalk is quite mobile in the ribosome, and is involved in E site tRNA release. Its function is as follows. Protein L1 is also a translational repressor protein, it controls the translation of the L11 operon by binding to its mRNA. This Sinorhizobium medicae (strain WSM419) (Ensifer medicae) protein is Large ribosomal subunit protein uL1.